We begin with the raw amino-acid sequence, 396 residues long: Obg-like ATPase 1 (396 aa).

Residues 23-283 (LKIGIVGLPN…LSAEERQKYL (261 aa)) form the OBG-type G domain. 32–37 (NVGKST) provides a ligand contact to ATP. Mg(2+) is bound by residues Ser-36 and Thr-56. Leu-231 is an ATP binding site. The short motif at 267–274 (LELRLQEL) is the Nuclear export signal element. Lys-294 carries the N6-acetyllysine modification. Positions 304-387 (QLEYFFTAGP…EDGDIIFFKF (84 aa)) constitute a TGS domain.

It belongs to the TRAFAC class OBG-HflX-like GTPase superfamily. OBG GTPase family. YchF/OLA1 subfamily. As to quaternary structure, monomer. Mg(2+) serves as cofactor.

The protein resides in the cytoplasm. Its subcellular location is the nucleus. It is found in the nucleolus. In terms of biological role, hydrolyzes ATP, and can also hydrolyze GTP with lower efficiency. Has lower affinity for GTP. The sequence is that of Obg-like ATPase 1 from Bos taurus (Bovine).